The chain runs to 396 residues: Elongation factor Tu (396 aa).

The tr-type G domain occupies 11-205 (KPHVNIGTIG…IVDEYIPTPE (195 aa)). The segment at 20–27 (GHVDHGKT) is G1. 20-27 (GHVDHGKT) lines the GTP pocket. A Mg(2+)-binding site is contributed by Thr-27. The interval 61 to 65 (GITIN) is G2. A G3 region spans residues 82 to 85 (DAPG). GTP is bound by residues 82–86 (DAPGH) and 137–140 (NKCD). The interval 137–140 (NKCD) is G4. The tract at residues 175–177 (SAL) is G5.

This sequence belongs to the TRAFAC class translation factor GTPase superfamily. Classic translation factor GTPase family. EF-Tu/EF-1A subfamily. As to quaternary structure, monomer.

Its subcellular location is the cytoplasm. The catalysed reaction is GTP + H2O = GDP + phosphate + H(+). Functionally, GTP hydrolase that promotes the GTP-dependent binding of aminoacyl-tRNA to the A-site of ribosomes during protein biosynthesis. The sequence is that of Elongation factor Tu from Lactobacillus acidophilus (strain ATCC 700396 / NCK56 / N2 / NCFM).